We begin with the raw amino-acid sequence, 289 residues long: Putative transmembrane protein ORF111 (289 aa).

5 helical membrane passes run 1-21, 112-132, 151-171, 189-209, and 261-281; these read MIGP…IFML, AIIT…VCIA, IGIT…FIVI, LNIS…TSIL, and YLLT…IGVG.

It is found in the host membrane. This chain is Putative transmembrane protein ORF111, found in Ostreid herpesvirus 1 (isolate France) (OsHV-1).